Consider the following 115-residue polypeptide: Large ribosomal subunit protein bL19 (115 aa).

Belongs to the bacterial ribosomal protein bL19 family.

Its function is as follows. This protein is located at the 30S-50S ribosomal subunit interface and may play a role in the structure and function of the aminoacyl-tRNA binding site. The chain is Large ribosomal subunit protein bL19 from Pectobacterium atrosepticum (strain SCRI 1043 / ATCC BAA-672) (Erwinia carotovora subsp. atroseptica).